The chain runs to 104 residues: UPF0145 protein DET1617 (104 aa).

The protein belongs to the UPF0145 family.

The protein is UPF0145 protein DET1617 of Dehalococcoides mccartyi (strain ATCC BAA-2266 / KCTC 15142 / 195) (Dehalococcoides ethenogenes (strain 195)).